Consider the following 72-residue polypeptide: Cell division protein ZapB (72 aa).

Positions 2-72 (SLEILDQLEG…RSLLGQIDNV (71 aa)) form a coiled coil. Residues 34 to 57 (NQQAQQANDELRSENEQLKGEHNN) form a disordered region. Residues 42 to 57 (DELRSENEQLKGEHNN) show a composition bias toward basic and acidic residues.

Belongs to the ZapB family. In terms of assembly, homodimer. The ends of the coiled-coil dimer bind to each other, forming polymers. Interacts with FtsZ.

Its subcellular location is the cytoplasm. Its function is as follows. Non-essential, abundant cell division factor that is required for proper Z-ring formation. It is recruited early to the divisome by direct interaction with FtsZ, stimulating Z-ring assembly and thereby promoting cell division earlier in the cell cycle. Its recruitment to the Z-ring requires functional FtsA or ZipA. The chain is Cell division protein ZapB from Mannheimia succiniciproducens (strain KCTC 0769BP / MBEL55E).